A 211-amino-acid chain; its full sequence is Protein-L-isoaspartate O-methyltransferase (211 aa).

Residue Ser-62 is part of the active site.

Belongs to the methyltransferase superfamily. L-isoaspartyl/D-aspartyl protein methyltransferase family.

Its subcellular location is the cytoplasm. The catalysed reaction is [protein]-L-isoaspartate + S-adenosyl-L-methionine = [protein]-L-isoaspartate alpha-methyl ester + S-adenosyl-L-homocysteine. Its function is as follows. Catalyzes the methyl esterification of L-isoaspartyl residues in peptides and proteins that result from spontaneous decomposition of normal L-aspartyl and L-asparaginyl residues. It plays a role in the repair and/or degradation of damaged proteins. The polypeptide is Protein-L-isoaspartate O-methyltransferase (Shewanella baltica (strain OS195)).